The sequence spans 267 residues: Farnesyl diphosphate phosphatase YisP (267 aa).

Belongs to the phytoene/squalene synthase family. As to quaternary structure, monomer.

It catalyses the reaction (2E,6E)-farnesyl diphosphate + H2O = (2E,6E)-farnesol + diphosphate. Diphosphate release from FPP is inhibited by zaragozic acid. A farnesyl diphosphate (FPP) phosphatase. Involved in biofilm formation, its disruption blocks biofilm synthesis which is restored by exogenous farnesol. Releases diphosphate from FPP, was initally suggested to be a squalene synthase. Diphosphate release is higher from FPP than geranyl pyrophosphate (GPP) or geranylgeranyl pyrophosphate (GGPP). Biofilm synthesis is partially restored by exogenous squalene, beta-carotene or retinol. Required for integrity of cell membrane lipid rafts. Involved in spatial organization of membranes, required for the flotillin-like proteins FloT and FloA to function correctly. The protein is Farnesyl diphosphate phosphatase YisP (yisP) of Bacillus subtilis (strain 168).